A 332-amino-acid polypeptide reads, in one-letter code: Phosphate acyltransferase (332 aa).

It belongs to the PlsX family. As to quaternary structure, homodimer. Probably interacts with PlsY.

The protein localises to the cytoplasm. It catalyses the reaction a fatty acyl-[ACP] + phosphate = an acyl phosphate + holo-[ACP]. It participates in lipid metabolism; phospholipid metabolism. Its function is as follows. Catalyzes the reversible formation of acyl-phosphate (acyl-PO(4)) from acyl-[acyl-carrier-protein] (acyl-ACP). This enzyme utilizes acyl-ACP as fatty acyl donor, but not acyl-CoA. The protein is Phosphate acyltransferase of Bacillus pumilus (strain SAFR-032).